The following is a 324-amino-acid chain: Taste receptor type 2 member 116 (324 aa).

The Extracellular portion of the chain corresponds to 1–2; that stretch reads MN. A helical transmembrane segment spans residues 3–23; sequence GVLYITFTVILSVEVIIGNFG. Residues 24–55 are Cytoplasmic-facing; sequence NGIIALVNIMDLAKRRKISSVDQILTALAISR. The helical transmembrane segment at 56–76 threads the bilayer; the sequence is IVLLWLVLVSWWLSMFYPGQW. Residues 77-94 are Extracellular-facing; the sequence is MTEGIDVIVHNVWTTLNQ. A helical membrane pass occupies residues 95 to 115; sequence ISLWLATSFSVFCFLKVANFS. Residues 116–128 are Cytoplasmic-facing; that stretch reads NTIFFYLKIRVKK. The chain crosses the membrane as a helical span at residues 129 to 149; that stretch reads VMTGTLIMFLLLLGLNIIVIN. Residues 150-183 are Extracellular-facing; it reads ASKTILIPEYKVNMSNSLNLKNTQISMLFPFANT. The N-linked (GlcNAc...) asparagine glycan is linked to Asn162. A helical membrane pass occupies residues 184–204; sequence LFGFIPFAVSLVTFLLLFFSL. Over 205-236 the chain is Cytoplasmic; sequence WKHQRKMHHGAQGCRDSSTKAHIRVLQTLIAS. Residues 237-257 traverse the membrane as a helical segment; that stretch reads ILLYFVFFLSLVVKVWISLFL. The Extracellular segment spans residues 258–261; the sequence is ERML. Residues 262 to 282 traverse the membrane as a helical segment; it reads LLLITQAAKIAFPSLHPWVLI. The Cytoplasmic segment spans residues 283–324; the sequence is LGNAKLRKASLSALQWLRCRHKDEHRRVQRPEVHSCGSSCMP.

Belongs to the G-protein coupled receptor T2R family.

The protein localises to the membrane. Putative taste receptor which may play a role in the perception of bitterness. This Rattus norvegicus (Rat) protein is Taste receptor type 2 member 116.